Here is a 445-residue protein sequence, read N- to C-terminus: tRNA-2-methylthio-N(6)-dimethylallyladenosine synthase (445 aa).

The 118-residue stretch at 2–119 (KKLYIRTFGC…LPQLIAERRH (118 aa)) folds into the MTTase N-terminal domain. C11, C48, C82, C156, C160, and C163 together coordinate [4Fe-4S] cluster. The 237-residue stretch at 142-378 (RVEGASAFVS…RIDQQAQAIS (237 aa)) folds into the Radical SAM core domain. The TRAM domain occupies 379 to 442 (QAMVGRVERA…PHSLRGEIVT (64 aa)).

The protein belongs to the methylthiotransferase family. MiaB subfamily. As to quaternary structure, monomer. It depends on [4Fe-4S] cluster as a cofactor.

It is found in the cytoplasm. The enzyme catalyses N(6)-dimethylallyladenosine(37) in tRNA + (sulfur carrier)-SH + AH2 + 2 S-adenosyl-L-methionine = 2-methylsulfanyl-N(6)-dimethylallyladenosine(37) in tRNA + (sulfur carrier)-H + 5'-deoxyadenosine + L-methionine + A + S-adenosyl-L-homocysteine + 2 H(+). Functionally, catalyzes the methylthiolation of N6-(dimethylallyl)adenosine (i(6)A), leading to the formation of 2-methylthio-N6-(dimethylallyl)adenosine (ms(2)i(6)A) at position 37 in tRNAs that read codons beginning with uridine. The chain is tRNA-2-methylthio-N(6)-dimethylallyladenosine synthase from Aromatoleum aromaticum (strain DSM 19018 / LMG 30748 / EbN1) (Azoarcus sp. (strain EbN1)).